We begin with the raw amino-acid sequence, 245 residues long: Biosynthetic peptidoglycan transglycosylase (245 aa).

Residues 29–49 traverse the membrane as a helical segment; sequence IVLAVLIVLILPYALIVFYLL.

The protein belongs to the glycosyltransferase 51 family.

It is found in the cell inner membrane. It catalyses the reaction [GlcNAc-(1-&gt;4)-Mur2Ac(oyl-L-Ala-gamma-D-Glu-L-Lys-D-Ala-D-Ala)](n)-di-trans,octa-cis-undecaprenyl diphosphate + beta-D-GlcNAc-(1-&gt;4)-Mur2Ac(oyl-L-Ala-gamma-D-Glu-L-Lys-D-Ala-D-Ala)-di-trans,octa-cis-undecaprenyl diphosphate = [GlcNAc-(1-&gt;4)-Mur2Ac(oyl-L-Ala-gamma-D-Glu-L-Lys-D-Ala-D-Ala)](n+1)-di-trans,octa-cis-undecaprenyl diphosphate + di-trans,octa-cis-undecaprenyl diphosphate + H(+). The protein operates within cell wall biogenesis; peptidoglycan biosynthesis. Its function is as follows. Peptidoglycan polymerase that catalyzes glycan chain elongation from lipid-linked precursors. In Rhizobium johnstonii (strain DSM 114642 / LMG 32736 / 3841) (Rhizobium leguminosarum bv. viciae), this protein is Biosynthetic peptidoglycan transglycosylase.